The following is a 224-amino-acid chain: Uracil-DNA glycosylase (224 aa).

Asp62 serves as the catalytic Proton acceptor.

This sequence belongs to the uracil-DNA glycosylase (UDG) superfamily. UNG family.

Its subcellular location is the cytoplasm. The catalysed reaction is Hydrolyzes single-stranded DNA or mismatched double-stranded DNA and polynucleotides, releasing free uracil.. Excises uracil residues from the DNA which can arise as a result of misincorporation of dUMP residues by DNA polymerase or due to deamination of cytosine. The sequence is that of Uracil-DNA glycosylase from Aliivibrio fischeri (strain ATCC 700601 / ES114) (Vibrio fischeri).